The chain runs to 377 residues: tRNA/tmRNA (uracil-C(5))-methyltransferase (377 aa).

Residues Q199, Y227, N232, E248, and D308 each coordinate S-adenosyl-L-methionine. Catalysis depends on C333, which acts as the Nucleophile. The Proton acceptor role is filled by E367.

Belongs to the class I-like SAM-binding methyltransferase superfamily. RNA M5U methyltransferase family. TrmA subfamily.

It carries out the reaction uridine(54) in tRNA + S-adenosyl-L-methionine = 5-methyluridine(54) in tRNA + S-adenosyl-L-homocysteine + H(+). It catalyses the reaction uridine(341) in tmRNA + S-adenosyl-L-methionine = 5-methyluridine(341) in tmRNA + S-adenosyl-L-homocysteine + H(+). Dual-specificity methyltransferase that catalyzes the formation of 5-methyluridine at position 54 (m5U54) in all tRNAs, and that of position 341 (m5U341) in tmRNA (transfer-mRNA). This chain is tRNA/tmRNA (uracil-C(5))-methyltransferase, found in Aeromonas salmonicida (strain A449).